The chain runs to 160 residues: Ureidoglycolate lyase (160 aa).

The protein belongs to the ureidoglycolate lyase family. In terms of assembly, homodimer. It depends on Ni(2+) as a cofactor.

The catalysed reaction is (S)-ureidoglycolate = urea + glyoxylate. The protein operates within nitrogen metabolism; (S)-allantoin degradation. Its function is as follows. Catalyzes the catabolism of the allantoin degradation intermediate (S)-ureidoglycolate, generating urea and glyoxylate. Involved in the anaerobic utilization of allantoin as sole nitrogen source. Reinforces the induction of genes involved in the degradation of allantoin and glyoxylate by producing glyoxylate. In Escherichia coli (strain K12 / MC4100 / BW2952), this protein is Ureidoglycolate lyase.